We begin with the raw amino-acid sequence, 169 residues long: Orotate phosphoribosyltransferase (169 aa).

Residues R86, K90, H92, and 111–119 contribute to the 5-phospho-alpha-D-ribose 1-diphosphate site; that span reads EDVTTSGGS. T115 and R143 together coordinate orotate.

This sequence belongs to the purine/pyrimidine phosphoribosyltransferase family. PyrE subfamily. As to quaternary structure, homodimer. The cofactor is Mg(2+).

It carries out the reaction orotidine 5'-phosphate + diphosphate = orotate + 5-phospho-alpha-D-ribose 1-diphosphate. Its pathway is pyrimidine metabolism; UMP biosynthesis via de novo pathway; UMP from orotate: step 1/2. In terms of biological role, catalyzes the transfer of a ribosyl phosphate group from 5-phosphoribose 1-diphosphate to orotate, leading to the formation of orotidine monophosphate (OMP). In Methanocorpusculum labreanum (strain ATCC 43576 / DSM 4855 / Z), this protein is Orotate phosphoribosyltransferase.